The primary structure comprises 328 residues: Glucan endo-1,3-beta-glucosidase, basic isoform 3 (328 aa).

E85 serves as the catalytic Proton donor. Residue E230 is the Nucleophile of the active site. Residues 306–328 constitute a propeptide, removed in mature form; sequence VSERVWDISAETNSTTSSLISEM. N318 carries an N-linked (GlcNAc...) asparagine glycan.

Belongs to the glycosyl hydrolase 17 family.

The protein localises to the vacuole. It catalyses the reaction Hydrolysis of (1-&gt;3)-beta-D-glucosidic linkages in (1-&gt;3)-beta-D-glucans.. Is thought to be an important plant defense-related product against fungal pathogens. This chain is Glucan endo-1,3-beta-glucosidase, basic isoform 3 (GLUB3), found in Solanum tuberosum (Potato).